The chain runs to 384 residues: MTPIQNAQQIFNRQHKNLPEITVYAPGRVNIIGEHTDYNDGFVMPCAINFGTAISGAIRDDHIWNVYAADLDETDEFSLNVEIPKSEHKWANYVRGVVKFIQERYPHFQQGANLVISGNVPLSSGLSSSAALEVAVGKFCQQLGDLPLSHTDIALNGQKAENQFVGANCGNMDQLISALGQENHLLMIDCRSLETTPTPVPQDVAVIIVNSNVPHDLVTGEYNTRRQQCEEAAKFFGVKALRDVSVEQFQKREAELTALSPLAAKRARHVVTENQRVLDAVEALKNNDLTCLGKLMEASHDSMRDDFEITVPQIDYLVELVQLVIGKSGGARMTGGGFGGCIVALAPHDKVDAVRKIIADNYEKTTGLKETFYVCTASQGVRVI.

Glu34 to Asp37 contributes to the substrate binding site. Ser123–Ser129 provides a ligand contact to ATP. Residues Ser129 and Glu161 each coordinate Mg(2+). The Proton acceptor role is filled by Asp173. Tyr222 lines the substrate pocket.

It belongs to the GHMP kinase family. GalK subfamily.

The protein localises to the cytoplasm. The catalysed reaction is alpha-D-galactose + ATP = alpha-D-galactose 1-phosphate + ADP + H(+). The protein operates within carbohydrate metabolism; galactose metabolism. Functionally, catalyzes the transfer of the gamma-phosphate of ATP to D-galactose to form alpha-D-galactose-1-phosphate (Gal-1-P). This is Galactokinase from Haemophilus influenzae (strain PittEE).